Here is a 394-residue protein sequence, read N- to C-terminus: Mannosyl-3-phosphoglycerate synthase (394 aa).

The protein belongs to the glycosyltransferase 2 family. The cofactor is Mg(2+).

The protein resides in the cytoplasm. The enzyme catalyses (2R)-3-phosphoglycerate + GDP-alpha-D-mannose = 2-O-(alpha-D-mannosyl)-3-phosphoglycerate + GDP + H(+). It functions in the pathway carbohydrate biosynthesis; 2-(alpha-D-mannosyl)-D-glycerate biosynthesis; 2-(alpha-D-mannosyl)-D-glycerate from GDP-alpha-D-mannose (MPG route): step 1/2. Functionally, transfers a mannosyl group from GDP-mannose to phosphoglycerate to form mannosyl-3-phosphoglycerate (MPG). The enzyme is absolutely specific for GDP-mannose and 3-phosphoglycerate, and transfers the mannosyl group with retention of configuration. The sequence is that of Mannosyl-3-phosphoglycerate synthase (mngA) from Pyrococcus horikoshii (strain ATCC 700860 / DSM 12428 / JCM 9974 / NBRC 100139 / OT-3).